Here is a 164-residue protein sequence, read N- to C-terminus: Crossover junction endodeoxyribonuclease RuvC (164 aa).

Residues aspartate 7, glutamate 67, and aspartate 140 contribute to the active site. Residues aspartate 7, glutamate 67, and aspartate 140 each contribute to the Mg(2+) site.

This sequence belongs to the RuvC family. In terms of assembly, homodimer which binds Holliday junction (HJ) DNA. The HJ becomes 2-fold symmetrical on binding to RuvC with unstacked arms; it has a different conformation from HJ DNA in complex with RuvA. In the full resolvosome a probable DNA-RuvA(4)-RuvB(12)-RuvC(2) complex forms which resolves the HJ. Mg(2+) serves as cofactor.

Its subcellular location is the cytoplasm. It catalyses the reaction Endonucleolytic cleavage at a junction such as a reciprocal single-stranded crossover between two homologous DNA duplexes (Holliday junction).. Its function is as follows. The RuvA-RuvB-RuvC complex processes Holliday junction (HJ) DNA during genetic recombination and DNA repair. Endonuclease that resolves HJ intermediates. Cleaves cruciform DNA by making single-stranded nicks across the HJ at symmetrical positions within the homologous arms, yielding a 5'-phosphate and a 3'-hydroxyl group; requires a central core of homology in the junction. The consensus cleavage sequence is 5'-(A/T)TT(C/G)-3'. Cleavage occurs on the 3'-side of the TT dinucleotide at the point of strand exchange. HJ branch migration catalyzed by RuvA-RuvB allows RuvC to scan DNA until it finds its consensus sequence, where it cleaves and resolves the cruciform DNA. This chain is Crossover junction endodeoxyribonuclease RuvC, found in Chloroflexus aggregans (strain MD-66 / DSM 9485).